Consider the following 284-residue polypeptide: 4-diphosphocytidyl-2-C-methyl-D-erythritol kinase (284 aa).

Lys-14 is an active-site residue. 98–108 provides a ligand contact to ATP; it reads PMGGGLGGGSS. Asp-140 is an active-site residue.

This sequence belongs to the GHMP kinase family. IspE subfamily.

It carries out the reaction 4-CDP-2-C-methyl-D-erythritol + ATP = 4-CDP-2-C-methyl-D-erythritol 2-phosphate + ADP + H(+). Its pathway is isoprenoid biosynthesis; isopentenyl diphosphate biosynthesis via DXP pathway; isopentenyl diphosphate from 1-deoxy-D-xylulose 5-phosphate: step 3/6. Functionally, catalyzes the phosphorylation of the position 2 hydroxy group of 4-diphosphocytidyl-2C-methyl-D-erythritol. The chain is 4-diphosphocytidyl-2-C-methyl-D-erythritol kinase from Shewanella baltica (strain OS155 / ATCC BAA-1091).